Here is a 735-residue protein sequence, read N- to C-terminus: MAAGGAVAAAPECRLLPYALHKWSSFSSTYLPENILVDKPNDQSSRWSSESNYPPQYLILKLERPAIVQNITFGKYEKTHVCNLKKFKVFGGMNEENMTELLSSGLKNDYNKETFTLKHKIDEQMFPCRFIKIVPLLSWGPSFNFSIWYVELSGIDDPDIVQPCLNWYSKYREQEAIRLCLKHFRQHNYTEAFESLQKKTKIALEHPMLTDIHDKLVLKGDFDACEELIEKAVNDGLFNQYISQQEYKPRWSQIIPKSTKGDGEDNRPGMRGGHQMVIDVQTETVYLFGGWDGTQDLADFWAYSVKENQWTCISRDTEKENGPSARSCHKMCIDIQRRQIYTLGRYLDSSVRNSKSLKSDFYRYDIDTNTWMLLSEDTAADGGPKLVFDHQMCMDSEKHMIYTFGGRILTCNGSVDDSRASEPQFSGLFAFNCQCQTWKLLREDSCNAGPEDIQSRIGHCMLFHSKNRCLYVFGGQRSKTYLNDFFSYDVDSDHVDIISDGTKKDSGMVPMTGFTQRATIDPELNEIHVLSGLSKDKEKREENVRNSFWIYDIVRNSWSCVYKNDQAAKDNPTKSLQEEEPCPRFAHQLVYDELHKVHYLFGGNPGKSCSPKMRLDDFWSLKLCRPSKDYLLRHCKYLIRKHRFEEKAQVDPLSALKYLQNDLYITVDHSDPEETKEFQLLASALFKSGSDFTALGFSDVDHTYAQRTQLFDTLVNFFPDSMTPPKGNLVDLITL.

Residue Ala2 is modified to N-acetylalanine. Positions Arg172–Leu204 constitute a LisH domain. Positions His206–Ser258 constitute a CTLH domain. Kelch repeat units follow at residues Thr284–Lys330, Gln339–Gln391, Ile408–Gly458, Cys469–Thr515, Glu526–Glu578, and Val597–Asp651.

In terms of assembly, homodimer; may form higher oligomers. Identified in the CTLH complex that contains GID4, RANBP9 and/or RANBP10, MKLN1, MAEA, RMND5A (or alternatively its paralog RMND5B), GID8, ARMC8, WDR26 and YPEL5. Within this complex, MAEA, RMND5A (or alternatively its paralog RMND5B), GID8, WDR26, and RANBP9 and/or RANBP10 form the catalytic core, while GID4, MKLN1, ARMC8 and YPEL5 have ancillary roles. Interacts with RANBP9. Part of a complex consisting of RANBP9, MKLN1 and GID8. Interacts with GABRA1. Interacts with the C-terminal tail of PTGER3.

It is found in the cytoplasm. Its subcellular location is the cytosol. It localises to the nucleus. The protein resides in the nucleoplasm. The protein localises to the cell projection. It is found in the ruffle. Its subcellular location is the cell cortex. It localises to the synapse. The protein resides in the postsynapse. Component of the CTLH E3 ubiquitin-protein ligase complex that selectively accepts ubiquitin from UBE2H and mediates ubiquitination and subsequent proteasomal degradation of the transcription factor HBP1. Required for internalization of the GABA receptor GABRA1 from the cell membrane via endosomes and subsequent GABRA1 degradation. Acts as a mediator of cell spreading and cytoskeletal responses to the extracellular matrix component THBS1. In Homo sapiens (Human), this protein is Muskelin (MKLN1).